We begin with the raw amino-acid sequence, 701 residues long: Elongation factor G (701 aa).

One can recognise a tr-type G domain in the interval 8–290; it reads ERYRNIGISA…AVVDYLPAPT (283 aa). Residues 17-24, 88-92, and 142-145 contribute to the GTP site; these read AHIDAGKT, DTPGH, and NKMD.

It belongs to the TRAFAC class translation factor GTPase superfamily. Classic translation factor GTPase family. EF-G/EF-2 subfamily.

It is found in the cytoplasm. Catalyzes the GTP-dependent ribosomal translocation step during translation elongation. During this step, the ribosome changes from the pre-translocational (PRE) to the post-translocational (POST) state as the newly formed A-site-bound peptidyl-tRNA and P-site-bound deacylated tRNA move to the P and E sites, respectively. Catalyzes the coordinated movement of the two tRNA molecules, the mRNA and conformational changes in the ribosome. In Aeromonas salmonicida (strain A449), this protein is Elongation factor G.